Reading from the N-terminus, the 90-residue chain is Antitoxin epsilon (90 aa).

The protein belongs to the epsilon antitoxin family. In the presence of the zeta toxin, forms an inactive PezA(2)PezT(2) heterotetramer.

Functionally, antitoxin component of a type II toxin-antitoxin (TA) system. Neutralizes the toxic effect of cognate zeta toxin. Part of a postsegregational killing (PSK) system involved in the killing of plasmid-free cells. Continuous synthesis of the epsilon antitoxin is required to counteract the zeta toxin. This chain is Antitoxin epsilon, found in Streptococcus agalactiae.